Here is a 668-residue protein sequence, read N- to C-terminus: Penicillin-binding protein 3 (668 aa).

Residues 7–23 (LLVFLCVGLIGLIGCSK) traverse the membrane as a helical segment. Serine 410 serves as the catalytic Acyl-ester intermediate.

Belongs to the transpeptidase family.

The protein resides in the cell membrane. It is found in the forespore inner membrane. It localises to the forespore outer membrane. The protein localises to the membrane raft. It catalyses the reaction Preferential cleavage: (Ac)2-L-Lys-D-Ala-|-D-Ala. Also transpeptidation of peptidyl-alanyl moieties that are N-acyl substituents of D-alanine.. It functions in the pathway cell wall biogenesis; peptidoglycan biosynthesis. In terms of biological role, penicillin-binding proteins (PBPs) function in the late steps of murein biosynthesis. Probably required for both cortical and vegetative peptidoglycan synthesis. Although not usually required for cell division, in the absence of PBP 2B (pbpB) it becomes essential. Confers resistance to oxacillin and cephalexin. The chain is Penicillin-binding protein 3 from Bacillus subtilis (strain 168).